The primary structure comprises 270 residues: tRNA pseudouridine synthase A (270 aa).

The Nucleophile role is filled by Asp-51. Tyr-109 serves as a coordination point for substrate.

Belongs to the tRNA pseudouridine synthase TruA family. As to quaternary structure, homodimer.

The enzyme catalyses uridine(38/39/40) in tRNA = pseudouridine(38/39/40) in tRNA. Formation of pseudouridine at positions 38, 39 and 40 in the anticodon stem and loop of transfer RNAs. This Burkholderia lata (strain ATCC 17760 / DSM 23089 / LMG 22485 / NCIMB 9086 / R18194 / 383) protein is tRNA pseudouridine synthase A.